An 86-amino-acid chain; its full sequence is MHGPHPTVKDIELSLAPEDIPVCNVQLDEEDYTDAVEPAQQAYRVVTECTKCSLPLRLVVECSHADIRALEQLLLGTLKLVCPRCV.

Residues 1-37 are E7 terminal domain; it reads MHGPHPTVKDIELSLAPEDIPVCNVQLDEEDYTDAVE. The segment at 49-85 is a zinc-finger region; sequence CTKCSLPLRLVVECSHADIRALEQLLLGTLKLVCPRC. The Nuclear export signal signature appears at 67–75; that stretch reads IRALEQLLL.

Belongs to the papillomaviridae E7 protein family. Homodimer. Homooligomer. Interacts with host RB1; this interaction induces dissociation of RB1-E2F1 complex thereby disrupting RB1 activity. Interacts with host EP300; this interaction represses EP300 transcriptional activity. Interacts with protein E2; this interaction inhibits E7 oncogenic activity. Interacts with host TMEM173/STING; this interaction impairs the ability of TMEM173/STING to sense cytosolic DNA and promote the production of type I interferon (IFN-alpha and IFN-beta). In terms of processing, highly phosphorylated.

The protein resides in the host cytoplasm. It localises to the host nucleus. Functionally, plays a role in viral genome replication by driving entry of quiescent cells into the cell cycle. Stimulation of progression from G1 to S phase allows the virus to efficiently use the cellular DNA replicating machinery to achieve viral genome replication. E7 protein has both transforming and trans-activating activities. Induces the disassembly of the E2F1 transcription factor from RB1, with subsequent transcriptional activation of E2F1-regulated S-phase genes. Interferes with host histone deacetylation mediated by HDAC1 and HDAC2, leading to transcription activation. Also plays a role in the inhibition of both antiviral and antiproliferative functions of host interferon alpha. Interaction with host TMEM173/STING impairs the ability of TMEM173/STING to sense cytosolic DNA and promote the production of type I interferon (IFN-alpha and IFN-beta). The polypeptide is Protein E7 (Homo sapiens (Human)).